The primary structure comprises 1416 residues: DNA-directed RNA polymerase subunit beta' (1416 aa).

Zn(2+) contacts are provided by C71, C73, C86, and C89. Mg(2+) contacts are provided by D461, D463, and D465. C815, C889, C896, and C899 together coordinate Zn(2+).

This sequence belongs to the RNA polymerase beta' chain family. In terms of assembly, the RNAP catalytic core consists of 2 alpha, 1 beta, 1 beta' and 1 omega subunit. When a sigma factor is associated with the core the holoenzyme is formed, which can initiate transcription. Mg(2+) serves as cofactor. Zn(2+) is required as a cofactor.

The enzyme catalyses RNA(n) + a ribonucleoside 5'-triphosphate = RNA(n+1) + diphosphate. In terms of biological role, DNA-dependent RNA polymerase catalyzes the transcription of DNA into RNA using the four ribonucleoside triphosphates as substrates. The polypeptide is DNA-directed RNA polymerase subunit beta' (Haemophilus influenzae (strain PittEE)).